The sequence spans 358 residues: D-xylulose reductase A (358 aa).

Residues Cys47, His72, and Glu73 each contribute to the Zn(2+) site. 182 to 187 (GAGPVG) is a binding site for NAD(+).

This sequence belongs to the zinc-containing alcohol dehydrogenase family. Zn(2+) serves as cofactor.

The enzyme catalyses xylitol + NAD(+) = D-xylulose + NADH + H(+). It participates in carbohydrate degradation; L-arabinose degradation via L-arabinitol; D-xylulose 5-phosphate from L-arabinose (fungal route): step 4/5. Functionally, xylitol dehydrogenase which catalyzes the conversion of xylitol to D-xylulose. Xylose is a major component of hemicelluloses such as xylan. Most fungi utilize D-xylose via three enzymatic reactions, xylose reductase (XR), xylitol dehydrogenase (XDH), and xylulokinase, to form xylulose 5-phosphate, which enters pentose phosphate pathway. The polypeptide is D-xylulose reductase A (xdhA) (Aspergillus oryzae (strain ATCC 42149 / RIB 40) (Yellow koji mold)).